We begin with the raw amino-acid sequence, 414 residues long: Dimethylsulfoniopropionate lyase DddY (414 aa).

Positions 1-18 are cleaved as a signal peptide; the sequence is MKYMVLFSGLLFSNVLVA.

It belongs to the DMSP lyase DddY family.

It localises to the periplasm. It catalyses the reaction S,S-dimethyl-beta-propiothetin = acrylate + dimethyl sulfide + H(+). Its function is as follows. Catalyzes the cleavage of dimethylsulfoniopropionate (DMSP) into dimethyl sulfide (DMS) and acrylate. The protein is Dimethylsulfoniopropionate lyase DddY of Shewanella woodyi (strain ATCC 51908 / MS32).